Consider the following 611-residue polypeptide: Chaperone protein DnaK (611 aa).

A Phosphothreonine; by autocatalysis modification is found at threonine 173. Low complexity predominate over residues 577–592; that stretch reads QAAAGQAEGAQGAQDA. A disordered region spans residues 577 to 611; sequence QAAAGQAEGAQGAQDAGTKKDNVVDAEFEEVKEDK. Over residues 600 to 611 the composition is skewed to acidic residues; sequence VDAEFEEVKEDK.

The protein belongs to the heat shock protein 70 family.

Acts as a chaperone. The protein is Chaperone protein DnaK of Bacillus cereus (strain G9842).